A 154-amino-acid polypeptide reads, in one-letter code: Immunity protein YwqK (154 aa).

As to quaternary structure, probably interacts with cognate toxin YwqJ but not with other non-cognate LXG toxins. The interaction inhibits the toxic activity of YwqJ.

It localises to the cytoplasm. Immunity component of one of 6 LXG toxin-immunity modules in this strain. They promote kin selection, mediate competition in biofilms, and drive spatial segregation of different strains, indicating that LXG toxins may help avoid warfare between strains in biofilms. Mediates intercellular competition during biofilm formation; disruption of the operon disadvantages the bacteria, but overexpression of the cognate immunity protein restores growth in competition with wild-type. In situ neutralizes the toxic effect of cognate toxin YqcG. Probably neutralizes the ability to inhibit growth of cognate toxin YwqJ. Probably does not have immunity protein activity on other LXG toxins. This Bacillus subtilis (strain 168) protein is Immunity protein YwqK (ywqK).